The sequence spans 454 residues: Glycosyl hydrolase family 109 protein (454 aa).

The tat-type signal signal peptide spans 1–29 (MFAMKRREFIAASAAVAASSLLPQTPAWA). NAD(+)-binding positions include 43–44 (MR), Asp65, 116–119 (WEYH), 136–137 (EV), and Asn165. Tyr194 provides a ligand contact to substrate. 224–228 (SEARW) is a binding site for NAD(+). Residues Arg229, 241-244 (YPSH), and Tyr324 each bind substrate. Residue Tyr241 coordinates NAD(+).

Belongs to the Gfo/Idh/MocA family. Glycosyl hydrolase 109 subfamily. NAD(+) is required as a cofactor. Post-translationally, predicted to be exported by the Tat system. The position of the signal peptide cleavage has not been experimentally proven.

In terms of biological role, glycosidase. The sequence is that of Glycosyl hydrolase family 109 protein from Stenotrophomonas maltophilia (strain K279a).